The chain runs to 100 residues: Large ribosomal subunit protein uL23 (100 aa).

It belongs to the universal ribosomal protein uL23 family. Part of the 50S ribosomal subunit. Contacts protein L29, and trigger factor when it is bound to the ribosome.

Functionally, one of the early assembly proteins it binds 23S rRNA. One of the proteins that surrounds the polypeptide exit tunnel on the outside of the ribosome. Forms the main docking site for trigger factor binding to the ribosome. This Xylella fastidiosa (strain 9a5c) protein is Large ribosomal subunit protein uL23.